We begin with the raw amino-acid sequence, 138 residues long: MTNWINTVSRDHVEAGVRGRFTQANHGKPHMLRKMARGDWIVFYSPKTVYPDGEPLQAFTAIGQVADDEPYRAEMTPDFQPWRRKVDFLDCTQTPIRPLIDQLDFIEDKARWGYKFRFGVFKIDDHDLEVIRSAMTDS.

The protein belongs to the UPF0310 family.

The chain is UPF0310 protein MAV_1800 from Mycobacterium avium (strain 104).